Consider the following 334-residue polypeptide: Glycerol-3-phosphate dehydrogenase [NAD(P)+] (334 aa).

Serine 14, tyrosine 15, histidine 35, and lysine 109 together coordinate NADPH. Residues lysine 109, glycine 138, and threonine 140 each coordinate sn-glycerol 3-phosphate. Residue alanine 142 coordinates NADPH. The sn-glycerol 3-phosphate site is built by lysine 194, aspartate 247, serine 257, arginine 258, and asparagine 259. Catalysis depends on lysine 194, which acts as the Proton acceptor. NADPH is bound at residue arginine 258. 2 residues coordinate NADPH: valine 282 and glutamate 284.

This sequence belongs to the NAD-dependent glycerol-3-phosphate dehydrogenase family.

Its subcellular location is the cytoplasm. The enzyme catalyses sn-glycerol 3-phosphate + NAD(+) = dihydroxyacetone phosphate + NADH + H(+). It carries out the reaction sn-glycerol 3-phosphate + NADP(+) = dihydroxyacetone phosphate + NADPH + H(+). It participates in membrane lipid metabolism; glycerophospholipid metabolism. Catalyzes the reduction of the glycolytic intermediate dihydroxyacetone phosphate (DHAP) to sn-glycerol 3-phosphate (G3P), the key precursor for phospholipid synthesis. The polypeptide is Glycerol-3-phosphate dehydrogenase [NAD(P)+] (Aeromonas salmonicida (strain A449)).